The following is a 77-amino-acid chain: Conotoxin VnMEKL-0111 (77 aa).

Positions 1–19 (MEKLTILLLVAAVLMSTQA) are cleaved as a signal peptide. The propeptide occupies 20 to 46 (LIQHDGEKSQKAKMKFLTARTLSAKTR). Cystine bridges form between cysteine 50–cysteine 66, cysteine 57–cysteine 71, and cysteine 65–cysteine 75.

This sequence belongs to the conotoxin O2 superfamily. In terms of tissue distribution, expressed by the venom duct.

Its subcellular location is the secreted. The chain is Conotoxin VnMEKL-0111 from Conus ventricosus (Mediterranean cone).